Here is a 196-residue protein sequence, read N- to C-terminus: Orotate phosphoribosyltransferase (196 aa).

117–125 lines the 5-phospho-alpha-D-ribose 1-diphosphate pocket; it reads EDVVTTGLS. The orotate site is built by threonine 121 and arginine 149.

It belongs to the purine/pyrimidine phosphoribosyltransferase family. PyrE subfamily. In terms of assembly, homodimer. Mg(2+) serves as cofactor.

It carries out the reaction orotidine 5'-phosphate + diphosphate = orotate + 5-phospho-alpha-D-ribose 1-diphosphate. Its pathway is pyrimidine metabolism; UMP biosynthesis via de novo pathway; UMP from orotate: step 1/2. Catalyzes the transfer of a ribosyl phosphate group from 5-phosphoribose 1-diphosphate to orotate, leading to the formation of orotidine monophosphate (OMP). In Rhizorhabdus wittichii (strain DSM 6014 / CCUG 31198 / JCM 15750 / NBRC 105917 / EY 4224 / RW1) (Sphingomonas wittichii), this protein is Orotate phosphoribosyltransferase.